The following is a 310-amino-acid chain: Mitochondrial thiamine pyrophosphate carrier 1 (310 aa).

6 helical membrane passes run 16–32, 88–104, 117–141, 173–197, 218–234, and 274–291; these read VSPY…GGVA, ILYV…YSAL, IVMP…LTTY, GISG…LMFW, ICGF…TFPL, and GYGV…ISLW. Solcar repeat units follow at residues 16 to 107, 120 to 205, and 211 to 299; these read VSPY…LSKS, PSSV…AREF, and HVPF…VISA.

This sequence belongs to the mitochondrial carrier (TC 2.A.29) family.

It is found in the mitochondrion inner membrane. In terms of biological role, mitochondrial transporter that mediates uptake of thiamine pyrophosphate (ThPP) into mitochondria. The protein is Mitochondrial thiamine pyrophosphate carrier 1 (TPC1) of Lodderomyces elongisporus (strain ATCC 11503 / CBS 2605 / JCM 1781 / NBRC 1676 / NRRL YB-4239) (Yeast).